A 431-amino-acid polypeptide reads, in one-letter code: tRNA-2-methylthio-N(6)-dimethylallyladenosine synthase (431 aa).

The MTTase N-terminal domain occupies 2-117; it reads KKLFIETLGC…ITEVVDKKHA (116 aa). [4Fe-4S] cluster is bound by residues cysteine 11, cysteine 48, cysteine 80, cysteine 149, cysteine 153, and cysteine 156. In terms of domain architecture, Radical SAM core spans 135 to 368; that stretch reads RTNPFKAMVN…QTRHTEILDE (234 aa). The TRAM domain maps to 371–431; sequence DAQLGKVHEV…SRGALDGVLV (61 aa).

Belongs to the methylthiotransferase family. MiaB subfamily. Monomer. [4Fe-4S] cluster is required as a cofactor.

It localises to the cytoplasm. The enzyme catalyses N(6)-dimethylallyladenosine(37) in tRNA + (sulfur carrier)-SH + AH2 + 2 S-adenosyl-L-methionine = 2-methylsulfanyl-N(6)-dimethylallyladenosine(37) in tRNA + (sulfur carrier)-H + 5'-deoxyadenosine + L-methionine + A + S-adenosyl-L-homocysteine + 2 H(+). In terms of biological role, catalyzes the methylthiolation of N6-(dimethylallyl)adenosine (i(6)A), leading to the formation of 2-methylthio-N6-(dimethylallyl)adenosine (ms(2)i(6)A) at position 37 in tRNAs that read codons beginning with uridine. This is tRNA-2-methylthio-N(6)-dimethylallyladenosine synthase from Sulfurovum sp. (strain NBC37-1).